Reading from the N-terminus, the 482-residue chain is MAAVRMLRTWSRNAGKLICVRYFQTCGNVHVLKPNYVCFFGYPSFKYSHPHHFLKTTAALRGQVVQFKLSDIGEGIREVTVKEWYVKEGDTVSQFDSICEVQSDKASVTITSRYDGVIKKLYYNLDDIAYVGKPLVDIETEALKDSEEDVVETPAVSHDEHTHQEIKGRKTLATPAVRRLAMENNIKLSEVVGSGKDGRILKEDILNYLEKQTGAILPPSPKVEIMPPPPKPKDMTVPILVSKPPVFTGKDKTEPIKGFQKAMVKTMSAALKIPHFGYCDEIDLTELVKLREELKPIAFARGIKLSFMPFFLKAASLGLLQFPILNASVDENCQNITYKASHNIGIAMDTEQGLIVPNVKNVQICSIFDIATELNRLQKLGSVSQLSTTDLTGGTFTLSNIGSIGGTFAKPVIMPPEVAIGALGSIKAIPRFNQKGEVYKAQIMNVSWSADHRVIDGATMSRFSNLWKSYLENPAFMLLDLK.

Residues 1–61 (MAAVRMLRTW…HFLKTTAALR (61 aa)) constitute a mitochondrion transit peptide. Residues 64 to 139 (VVQFKLSDIG…YVGKPLVDIE (76 aa)) form the Lipoyl-binding domain. The residue at position 105 (Lys105) is an N6-lipoyllysine. Lys133 bears the N6-succinyllysine mark. Residues 145–160 (DSEEDVVETPAVSHDE) are critical for association with PPM1K. A disordered region spans residues 147–168 (EEDVVETPAVSHDEHTHQEIKG). The span at 157–168 (SHDEHTHQEIKG) shows a compositional bias: basic and acidic residues. One can recognise a Peripheral subunit-binding (PSBD) domain in the interval 172-209 (LATPAVRRLAMENNIKLSEVVGSGKDGRILKEDILNYL). Residue Lys196 is modified to N6-acetyllysine; alternate. At Lys196 the chain carries N6-succinyllysine; alternate. Residue Lys202 is modified to N6-acetyllysine. Phosphoserine is present on Ser220. An N6-acetyllysine mark is found at Lys243 and Lys250. Lys261 bears the N6-succinyllysine mark. Lys289 is modified (N6-acetyllysine; alternate). Lys289 is modified (N6-succinyllysine; alternate). Arg291 contributes to the CoA binding site. Lys295 and Lys304 each carry N6-acetyllysine. The CoA site is built by Ser306, Asp349, Gln378, Ser399, Asn400, Ser403, Gly424, and Ile426. Lys435 carries the N6-acetyllysine modification. Lys440 is modified (N6-acetyllysine; alternate). An N6-succinyllysine; alternate modification is found at Lys440. Active-site residues include His452 and Asp456.

The protein belongs to the 2-oxoacid dehydrogenase family. Forms a 24-polypeptide structural core with octahedral symmetry that represents the E2 component of the branched-chain alpha-ketoacid dehydrogenase (BCKDH) complex. The BCKDH complex is composed of three major building blocks E1, E2 and E3. It is organized around E2, a 24-meric cubic core composed of DBT, to which are associated 6 to 12 copies of E1, and approximately 6 copies of the dehydrogenase E3, a DLD dimer. Interacts with PPM1K with a 24:1 stoichiometry; the N-terminal region (residues 49-61) of PPM1K and C-terminal linker of the lipoyl domain of DBT/E2 (residues 145-160) are critical for this interaction whereas the lipoyl prosthetic group is dispensable. This interaction requires colocalization in mitochondria. PPM1K competes with BCKDK for binding to DBT; this interaction is modulated by branched-chain alpha-keto acids (BCKAs). At steady state, BCKDH holoenzyme preferentially binds BCKDK and BCKDHA is phosphorylated. In response to high levels of BCKAs, BCKDK is replaced by PPM1K leading to BCKDHA dephosphorylation. (R)-lipoate is required as a cofactor.

The protein resides in the mitochondrion matrix. The catalysed reaction is N(6)-[(R)-dihydrolipoyl]-L-lysyl-[protein] + 2-methylpropanoyl-CoA = N(6)-[(R)-S(8)-2-methylpropanoyldihydrolipoyl]-L-lysyl-[protein] + CoA. In terms of biological role, the branched-chain alpha-keto dehydrogenase complex catalyzes the overall conversion of alpha-keto acids to acyl-CoA and CO(2). It contains multiple copies of three enzymatic components: branched-chain alpha-keto acid decarboxylase (E1), lipoamide acyltransferase (E2) and lipoamide dehydrogenase (E3). Within this complex, the catalytic function of this enzyme is to accept, and to transfer to coenzyme A, acyl groups that are generated by the branched-chain alpha-keto acid decarboxylase component. This chain is Lipoamide acyltransferase component of branched-chain alpha-keto acid dehydrogenase complex, mitochondrial, found in Homo sapiens (Human).